The primary structure comprises 637 residues: Sodium-dependent proline transporter (637 aa).

Residues 1–45 are Cytoplasmic-facing; the sequence is MKKLQEAHLRKPITPDLLMTPSDQGDVDLDVDFAADRGNWTGKLD. Position 20 is a phosphothreonine (Thr-20). The residue at position 22 (Ser-22) is a Phosphoserine. The next 3 helical transmembrane spans lie at 46–66, 74–93, and 117–137; these read FLLS…FPYR, AFLV…LFFL, and GAGA…NMII. Residues 138 to 214 lie on the Extracellular side of the membrane; it reads AYVLFYLFAS…QGIGRPGEIR (77 aa). The N-linked (GlcNAc...) asparagine glycan is linked to Asn-182. 9 helical membrane-spanning segments follow: residues 215–233, 242–259, 295–312, 324–345, 378–397, 425–443, 459–479, 500–519, and 538–556; these read WNLC…LCIL, VVYF…MLLV, IFYS…FASY, FIVT…FSVL, LPLS…TLGL, VFSG…ILTT, SFGL…VYGI, ACWL…YSIV, and LGIL…GMLV. Residues 557-637 are Cytoplasmic-facing; the sequence is AVLREEGSLW…IAEEEEESMM (81 aa). 2 positions are modified to phosphoserine: Ser-573 and Ser-582. Thr-588 is modified (phosphothreonine). Tyr-591 bears the Phosphotyrosine mark. Phosphoserine occurs at positions 598 and 600.

Belongs to the sodium:neurotransmitter symporter (SNF) (TC 2.A.22) family. SLC6A7 subfamily.

Its subcellular location is the synaptic cell membrane. The enzyme catalyses L-proline(out) + chloride(out) + 2 Na(+)(out) = L-proline(in) + chloride(in) + 2 Na(+)(in). It catalyses the reaction L-pipecolate(out) + chloride(out) + 2 Na(+)(out) = L-pipecolate(in) + chloride(in) + 2 Na(+)(in). Its function is as follows. Brain specific sodium (and chloride)-dependent proline transporter. Terminates the action of proline by its high affinity sodium-dependent reuptake into presynaptic terminals. This chain is Sodium-dependent proline transporter, found in Mus musculus (Mouse).